The primary structure comprises 616 residues: Elongation factor 4 (616 aa).

The 182-residue stretch at 14–195 (SRIRNFCIIA…EVIRQVPPPV (182 aa)) folds into the tr-type G domain. GTP is bound by residues 26–31 (DHGKST) and 142–145 (NKID).

The protein belongs to the TRAFAC class translation factor GTPase superfamily. Classic translation factor GTPase family. LepA subfamily.

The protein localises to the cell membrane. It carries out the reaction GTP + H2O = GDP + phosphate + H(+). Required for accurate and efficient protein synthesis under certain stress conditions. May act as a fidelity factor of the translation reaction, by catalyzing a one-codon backward translocation of tRNAs on improperly translocated ribosomes. Back-translocation proceeds from a post-translocation (POST) complex to a pre-translocation (PRE) complex, thus giving elongation factor G a second chance to translocate the tRNAs correctly. Binds to ribosomes in a GTP-dependent manner. The polypeptide is Elongation factor 4 (Nocardia farcinica (strain IFM 10152)).